Consider the following 126-residue polypeptide: uncharacterized protein (126 aa).

This is an uncharacterized protein from Mycoplasmopsis pulmonis (strain UAB CTIP) (Mycoplasma pulmonis).